Reading from the N-terminus, the 127-residue chain is Small ribosomal subunit protein bS6 (127 aa).

The disordered stretch occupies residues 99-127 (PSPMMKEEKSKSMMPGDAAPAAPAETAAA). Positions 110-127 (SMMPGDAAPAAPAETAAA) are enriched in low complexity.

Belongs to the bacterial ribosomal protein bS6 family.

Its function is as follows. Binds together with bS18 to 16S ribosomal RNA. The sequence is that of Small ribosomal subunit protein bS6 from Dechloromonas aromatica (strain RCB).